Here is a 528-residue protein sequence, read N- to C-terminus: DNA primase large subunit (528 aa).

Residues asparagine 210–arginine 239 are H-T-H-like motif. Residues cysteine 336, cysteine 417, cysteine 434, and cysteine 474 each coordinate [4Fe-4S] cluster.

Belongs to the eukaryotic-type primase large subunit family. In terms of assembly, DNA polymerase alpha:primase is a four subunit enzyme complex, which is assembled throughout the cell cycle, and consists of the two DNA polymerase subunits A POL1 and B POL12, and the DNA primase large PRI2 and small PRI1 subunits. Interacts with MCM10. [4Fe-4S] cluster is required as a cofactor.

DNA primase is the polymerase that synthesizes small RNA primers for the Okazaki fragments made during discontinuous DNA replication. In a complex with DNA polymerase alpha (DNA polymerase alpha:primase) constitutes a replicative polymerase. Both primase components participate in formation of the active center, but the ATP-binding site is exclusively located on p48. This is DNA primase large subunit (PRI2) from Saccharomyces cerevisiae (strain ATCC 204508 / S288c) (Baker's yeast).